The following is an 883-amino-acid chain: Bifunctional heparan sulfate N-deacetylase/N-sulfotransferase 2 (883 aa).

Residues 1-18 (MLQLWKVVRPARQLELHR) are Cytoplasmic-facing. The helical; Signal-anchor for type II membrane protein transmembrane segment at 19–39 (LILLLIAFSLGSMGFLAYYVS) threads the bilayer. Residues 40 to 883 (TSPKAKEPLP…REELQHSSLG (844 aa)) lie on the Lumenal side of the membrane. Positions 41–597 (SPKAKEPLPL…KRHKDIWSKE (557 aa)) are heparan sulfate N-deacetylase 2. A disordered region spans residues 49–81 (PLPLGDCSSGGAAGPGPARPPVPPRPPRPPETA). Pro residues predominate over residues 65–78 (PARPPVPPRPPRPP). N-linked (GlcNAc...) asparagine glycans are attached at residues N233, N350, and N400. Residues 598–883 (KTCDRLPKFL…REELQHSSLG (286 aa)) are heparan sulfate N-sulfotransferase 2. The For sulfotransferase activity role is filled by K613. 613–617 (KTGTT) lines the 3'-phosphoadenylyl sulfate pocket. N666 carries N-linked (GlcNAc...) asparagine glycosylation. S711 contributes to the 3'-phosphoadenylyl sulfate binding site. 2 N-linked (GlcNAc...) asparagine glycosylation sites follow: N726 and N802. C817 and C827 form a disulfide bridge. 832–836 (KGRRY) serves as a coordination point for 3'-phosphoadenylyl sulfate.

It belongs to the sulfotransferase 1 family. NDST subfamily. As to quaternary structure, monomer.

The protein resides in the golgi apparatus membrane. It carries out the reaction alpha-D-glucosaminyl-[heparan sulfate](n) + 3'-phosphoadenylyl sulfate = N-sulfo-alpha-D-glucosaminyl-[heparan sulfate](n) + adenosine 3',5'-bisphosphate + 2 H(+). The protein operates within glycan metabolism; heparan sulfate biosynthesis. It functions in the pathway glycan metabolism; heparin biosynthesis. Essential bifunctional enzyme that catalyzes both the N-deacetylation and the N-sulfation of glucosamine (GlcNAc) of the glycosaminoglycan in heparan sulfate. Modifies the GlcNAc-GlcA disaccharide repeating sugar backbone to make N-sulfated heparosan, a prerequisite substrate for later modifications in heparin biosynthesis. Plays a role in determining the extent and pattern of sulfation of heparan sulfate. Required for the exosomal release of SDCBP, CD63 and syndecan. The polypeptide is Bifunctional heparan sulfate N-deacetylase/N-sulfotransferase 2 (NDST2) (Homo sapiens (Human)).